The following is a 308-amino-acid chain: UDP-N-acetylenolpyruvoylglucosamine reductase (308 aa).

Positions Arg22 to Gly185 constitute an FAD-binding PCMH-type domain. The active site involves Arg165. Residues Gln197–Ser211 are compositionally biased toward basic and acidic residues. A disordered region spans residues Gln197 to Ala228. The segment covering Ala212 to Gly226 has biased composition (polar residues). The Proton donor role is filled by Ser214. Glu296 is an active-site residue.

This sequence belongs to the MurB family. It depends on FAD as a cofactor.

The protein localises to the cytoplasm. It carries out the reaction UDP-N-acetyl-alpha-D-muramate + NADP(+) = UDP-N-acetyl-3-O-(1-carboxyvinyl)-alpha-D-glucosamine + NADPH + H(+). Its pathway is cell wall biogenesis; peptidoglycan biosynthesis. Functionally, cell wall formation. The protein is UDP-N-acetylenolpyruvoylglucosamine reductase of Cereibacter sphaeroides (strain ATCC 17025 / ATH 2.4.3) (Rhodobacter sphaeroides).